The chain runs to 287 residues: MSKFELIPYRLYLSQSRTWMHKIKAEVKIYVLLLLWISFFILSYRKLLIVAFSLIITSSTIKCNQYIVKKHFAQTLVMGIAAIMFSFSITNSYQYNLKKEQYRSISSSLAQKTIQRYTPKQITHFNNQISEKLLFAIKPGSYFFITIYSIKLVMITTSSENLALSIYKTKIVNQIFNNELLFIFLLSSHIFNNIVVKMEKITQIISLRGSLNLLKHSTGIFTLFFLISKLFFSEIIKESTEISQSLYTRNLNQENDNFLKIYTSQIRTNDYICLFICTTYVTILFLS.

The next 6 helical transmembrane spans lie at 32–52, 72–92, 133–153, 175–195, 216–236, and 266–286; these read LLLL…IVAF, FAQT…ITNS, LLFA…IKLV, IFNN…NNIV, HSTG…SEII, and IRTN…ILFL.

The protein belongs to the ycf92 family.

The protein resides in the plastid. It localises to the chloroplast membrane. This is an uncharacterized protein from Porphyra purpurea (Red seaweed).